Reading from the N-terminus, the 187-residue chain is Elongation factor P (187 aa).

This sequence belongs to the elongation factor P family.

The protein resides in the cytoplasm. It functions in the pathway protein biosynthesis; polypeptide chain elongation. Involved in peptide bond synthesis. Stimulates efficient translation and peptide-bond synthesis on native or reconstituted 70S ribosomes in vitro. Probably functions indirectly by altering the affinity of the ribosome for aminoacyl-tRNA, thus increasing their reactivity as acceptors for peptidyl transferase. The chain is Elongation factor P from Thermodesulfovibrio yellowstonii (strain ATCC 51303 / DSM 11347 / YP87).